Reading from the N-terminus, the 587-residue chain is MAATAYEHLKLHITPEKFYVEACDDGADDVLIIDRVSTEVTLAVKKDVPPSAVTRPIYGIMGTIHLVAGNYLVVITKKMKVGEFFNHVIWKATDFDVLSYKKTMLHLTDIQLQDNKTFLAMLNHVLSTDGFYFSTTYDLTHTLQRLSNTSPEFQEMSLLERADQRFVWNGHLLRELSAQPEVHRFALPVLHGFITMHSCSINGKYFDWILISRRSCFRAGVRYYVRGIDSEGHAANFVETEQIVHYSGNRASFVQTRGSIPVFWSQRPNLKYKPDPQINKVANHMDGFQRHFDSQVIIYGKQVIINLVNHKGSEKPLEQTFAKMVSSLGSGMIRYIAFDFHKECKNMRWDRLSILLDQVAEMQDELSYFLVDSAGKVVTNQEGVFRSNCMDCLDRTNVIQSLLARRSLQAQLQRLGVLHVGQKLEEQDEFEKIYKNAWADNANACAKQYAGTGALKTDFTRTGKRTQLGLVMDGFNSLLRYYKNNFSDGFRQDSIDLFLGNYSVDELDSHSPLSVPRDWKFLALPIIMVVAFSMCIICLLMAGDTWTETLAYVLFWGVASIGTFFIILYNGKDFVDAPRLVQKEKID.

The Cytoplasmic portion of the chain corresponds to 1 to 520 (MAATAYEHLK…SPLSVPRDWK (520 aa)). The SAC domain maps to 122-451 (LNHVLSTDGF…ANACAKQYAG (330 aa)). The tract at residues 452 to 587 (TGALKTDFTR…PRLVQKEKID (136 aa)) is essential for phosphatidylinositol-4-phosphate phosphatase activity. An N6-acetyllysine modification is found at Lys456. A helical transmembrane segment spans residues 521-541 (FLALPIIMVVAFSMCIICLLM). The Lumenal segment spans residues 542-548 (AGDTWTE). The chain crosses the membrane as a helical span at residues 549 to 569 (TLAYVLFWGVASIGTFFIILY). Topologically, residues 570–587 (NGKDFVDAPRLVQKEKID) are cytoplasmic.

As to quaternary structure, interacts with TMEM39A. Interacts with SEC23A and SEC24A; this interaction is reduced in the absence of TMEM39A. Interacts with PLEKHA3 and VAPA and/or VAPB to form a ternary complex. Detected in spleen, lung, liver, skeletal muscle, kidney, testis and in cerebellar Purkinje cells (at protein level). Ubiquitous. Highly expressed in brain, spleen, liver and kidney.

It localises to the endoplasmic reticulum membrane. The protein resides in the golgi apparatus membrane. It carries out the reaction a 1,2-diacyl-sn-glycero-3-phospho-(1D-myo-inositol-3-phosphate) + H2O = a 1,2-diacyl-sn-glycero-3-phospho-(1D-myo-inositol) + phosphate. The enzyme catalyses a 1,2-diacyl-sn-glycero-3-phospho-(1D-myo-inositol 4-phosphate) + H2O = a 1,2-diacyl-sn-glycero-3-phospho-(1D-myo-inositol) + phosphate. Its function is as follows. Phosphoinositide phosphatase which catalyzes the hydrolysis of phosphatidylinositol 4-phosphate (PtdIns(4)P), phosphatidylinositol 3-phosphate (PtdIns(3)P) and has low activity towards phosphatidylinositol-3,5-bisphosphate (PtdIns(3,5)P2). Shows a very robust PtdIns(4)P phosphatase activity when it binds PtdIns(4)P in a 'cis' configuration in the cellular environment, with much less activity seen when it binds PtdIns(4)P in 'trans' configuration. PtdIns(4)P phosphatase activity (when it binds PtdIns(4)P in 'trans' configuration) is enhanced in the presence of PLEKHA3. The polypeptide is Phosphatidylinositol-3-phosphatase SAC1 (Sacm1l) (Rattus norvegicus (Rat)).